Consider the following 143-residue polypeptide: Nucleoside diphosphate kinase (143 aa).

The NDPK-like domain maps to 1–132; the sequence is MVKPDGVQRG…LWFSPQELCQ (132 aa). Residues lysine 3, phenylalanine 51, arginine 79, threonine 85, arginine 96, valine 103, and asparagine 106 each coordinate ADP. ATP-binding residues include lysine 3, phenylalanine 51, arginine 79, threonine 85, and arginine 96. Position 106 (asparagine 106) interacts with ATP. The Pros-phosphohistidine intermediate role is filled by histidine 109.

Belongs to the NDK family. In terms of assembly, homohexamer. Mg(2+) is required as a cofactor.

The catalysed reaction is a 2'-deoxyribonucleoside 5'-diphosphate + ATP = a 2'-deoxyribonucleoside 5'-triphosphate + ADP. It carries out the reaction a ribonucleoside 5'-diphosphate + ATP = a ribonucleoside 5'-triphosphate + ADP. The enzyme catalyses GDP + ATP = GTP + ADP. The protein operates within purine metabolism; purine nucleotide biosynthesis. Major role in the synthesis of nucleoside triphosphates other than ATP. The ATP gamma phosphate is transferred to the NDP beta phosphate via a ping-pong mechanism, using a phosphorylated active-site intermediate. The polypeptide is Nucleoside diphosphate kinase (Schistosoma mansoni (Blood fluke)).